The primary structure comprises 184 residues: Probable DNA-directed RNA polymerase subunit delta (184 aa).

An HTH HARE-type domain is found at 14-82; that stretch reads KSFIDMAHTL…GENNWGLRDW (69 aa). The tract at residues 114–184 is disordered; sequence LLGEEEEEID…FNDDPDDDKI (71 aa). A compositionally biased stretch (acidic residues) spans 117–184; that stretch reads EEEEEIDDQE…FNDDPDDDKI (68 aa).

Belongs to the RpoE family. RNAP is composed of a core of 2 alpha, a beta and a beta' subunits. The core is associated with a delta subunit and one of several sigma factors.

In terms of biological role, participates in both the initiation and recycling phases of transcription. In the presence of the delta subunit, RNAP displays an increased specificity of transcription, a decreased affinity for nucleic acids, and an increased efficiency of RNA synthesis because of enhanced recycling. The sequence is that of Probable DNA-directed RNA polymerase subunit delta from Staphylococcus carnosus (strain TM300).